Consider the following 81-residue polypeptide: Acyl carrier protein (81 aa).

One can recognise a Carrier domain in the interval 4-79 (QEIFEKVQTI…QAVDFISQKV (76 aa)). At serine 39 the chain carries O-(pantetheine 4'-phosphoryl)serine.

The protein belongs to the acyl carrier protein (ACP) family. Post-translationally, 4'-phosphopantetheine is transferred from CoA to a specific serine of apo-ACP by AcpS. This modification is essential for activity because fatty acids are bound in thioester linkage to the sulfhydryl of the prosthetic group.

The protein resides in the plastid. The protein localises to the chloroplast. Its pathway is lipid metabolism; fatty acid biosynthesis. In terms of biological role, carrier of the growing fatty acid chain in fatty acid biosynthesis. The sequence is that of Acyl carrier protein from Guillardia theta (Cryptophyte).